A 504-amino-acid chain; its full sequence is L-carnitine/gamma-butyrobetaine antiporter (504 aa).

Transmembrane regions (helical) follow at residues Ile-10–Val-30, Trp-51–Phe-71, Ile-92–Ile-112, Gly-143–Val-163, Phe-195–Val-215, Leu-231–Leu-251, Ser-263–Met-283, Trp-316–Ala-336, Leu-347–Gly-367, Trp-398–Ala-418, Leu-446–Leu-466, and Ala-475–Ile-495.

Belongs to the BCCT transporter (TC 2.A.15) family. CaiT subfamily. Homotrimer.

It is found in the cell inner membrane. The enzyme catalyses 4-(trimethylamino)butanoate(in) + (R)-carnitine(out) = 4-(trimethylamino)butanoate(out) + (R)-carnitine(in). Its pathway is amine and polyamine metabolism; carnitine metabolism. Functionally, catalyzes the exchange of L-carnitine for gamma-butyrobetaine. The polypeptide is L-carnitine/gamma-butyrobetaine antiporter (Escherichia coli O157:H7).